The sequence spans 456 residues: 3-isopropylmalate dehydratase large subunit (456 aa).

[4Fe-4S] cluster-binding residues include Cys336, Cys396, and Cys399.

The protein belongs to the aconitase/IPM isomerase family. LeuC type 1 subfamily. In terms of assembly, heterodimer of LeuC and LeuD. It depends on [4Fe-4S] cluster as a cofactor.

It catalyses the reaction (2R,3S)-3-isopropylmalate = (2S)-2-isopropylmalate. It functions in the pathway amino-acid biosynthesis; L-leucine biosynthesis; L-leucine from 3-methyl-2-oxobutanoate: step 2/4. Its function is as follows. Catalyzes the isomerization between 2-isopropylmalate and 3-isopropylmalate, via the formation of 2-isopropylmaleate. This Staphylococcus epidermidis (strain ATCC 12228 / FDA PCI 1200) protein is 3-isopropylmalate dehydratase large subunit.